The sequence spans 471 residues: V-type ATP synthase beta chain (471 aa).

Belongs to the ATPase alpha/beta chains family.

Functionally, produces ATP from ADP in the presence of a proton gradient across the membrane. The V-type beta chain is a regulatory subunit. The sequence is that of V-type ATP synthase beta chain from Streptococcus pyogenes serotype M12 (strain MGAS2096).